A 253-amino-acid chain; its full sequence is Tetraspanin-11 (253 aa).

A run of 4 helical transmembrane segments spans residues 19–39, 63–83, 93–113, and 220–240; these read LLFI…AVGI, VLIF…GAII, YFCL…LAHV, and LLLM…GMVL.

Belongs to the tetraspanin (TM4SF) family.

Its subcellular location is the membrane. The sequence is that of Tetraspanin-11 (Tspan11) from Rattus norvegicus (Rat).